The following is a 346-amino-acid chain: Tryptophan--tRNA ligase (346 aa).

ATP-binding positions include 21–23 (QPT) and 30–31 (GN). The 'HIGH' region signature appears at 22–31 (PTADSYHLGN). Asp-147 is an L-tryptophan binding site. ATP contacts are provided by residues 159-161 (GED), Ile-198, and 207-211 (KMSKS). The short motif at 207 to 211 (KMSKS) is the 'KMSKS' region element.

This sequence belongs to the class-I aminoacyl-tRNA synthetase family. In terms of assembly, homodimer.

The protein localises to the cytoplasm. It catalyses the reaction tRNA(Trp) + L-tryptophan + ATP = L-tryptophyl-tRNA(Trp) + AMP + diphosphate + H(+). Its function is as follows. Catalyzes the attachment of tryptophan to tRNA(Trp). This Corynebacterium efficiens (strain DSM 44549 / YS-314 / AJ 12310 / JCM 11189 / NBRC 100395) protein is Tryptophan--tRNA ligase.